The sequence spans 241 residues: Phosphoadenosine 5'-phosphosulfate reductase (241 aa).

The Nucleophile; cysteine thiosulfonate intermediate role is filled by cysteine 235.

The protein belongs to the PAPS reductase family. CysH subfamily.

The protein localises to the cytoplasm. The enzyme catalyses [thioredoxin]-disulfide + sulfite + adenosine 3',5'-bisphosphate + 2 H(+) = [thioredoxin]-dithiol + 3'-phosphoadenylyl sulfate. Its pathway is sulfur metabolism; hydrogen sulfide biosynthesis; sulfite from sulfate: step 3/3. Its function is as follows. Catalyzes the formation of sulfite from phosphoadenosine 5'-phosphosulfate (PAPS) using thioredoxin as an electron donor. The sequence is that of Phosphoadenosine 5'-phosphosulfate reductase from Xanthomonas axonopodis pv. citri (strain 306).